Here is a 140-residue protein sequence, read N- to C-terminus: uncharacterized protein (140 aa).

Helical transmembrane passes span 63–83 (LGFV…TLAT) and 119–139 (ILLY…IFIN).

Its subcellular location is the membrane. This is an uncharacterized protein from Schizosaccharomyces pombe (strain 972 / ATCC 24843) (Fission yeast).